The following is a 279-amino-acid chain: Phosphatidylglycerol--prolipoprotein diacylglyceryl transferase (279 aa).

7 helical membrane-spanning segments follow: residues 22–42 (SAHWYGLMYLIGFYFIMWSSI), 58–78 (ILYFSFLNALIGGRIGYVIFY), 89–109 (FIFKVWEGGMSFHGGLLGSII), 128–148 (FLVPLIPFGLGFGRIGNFING), 195–215 (ISQLYEMFLEGILLFIILNIF), 223–243 (GYMSGLFLILYGSFRIIAEFF), and 256–276 (YISLGQILSIPMILYGLILII). An a 1,2-diacyl-sn-glycero-3-phospho-(1'-sn-glycerol)-binding site is contributed by Arg141.

It belongs to the Lgt family.

The protein resides in the cell membrane. It catalyses the reaction L-cysteinyl-[prolipoprotein] + a 1,2-diacyl-sn-glycero-3-phospho-(1'-sn-glycerol) = an S-1,2-diacyl-sn-glyceryl-L-cysteinyl-[prolipoprotein] + sn-glycerol 1-phosphate + H(+). It participates in protein modification; lipoprotein biosynthesis (diacylglyceryl transfer). Catalyzes the transfer of the diacylglyceryl group from phosphatidylglycerol to the sulfhydryl group of the N-terminal cysteine of a prolipoprotein, the first step in the formation of mature lipoproteins. The chain is Phosphatidylglycerol--prolipoprotein diacylglyceryl transferase from Wigglesworthia glossinidia brevipalpis.